The sequence spans 272 residues: 2-amino-3,7-dideoxy-D-threo-hept-6-ulosonate synthase (272 aa).

The active-site Proton acceptor is Asp33. 1-deoxy-D-threo-hexo-2,5-diulose 6-phosphate contacts are provided by residues 33–37 and 153–155; these read DHGVS and YPR. The active-site Proton donor is Tyr153. Lys184 (schiff-base intermediate with substrate) is an active-site residue. Residues 209–210 and 237–238 each bind 1-deoxy-D-threo-hexo-2,5-diulose 6-phosphate; these read GG and GR.

It belongs to the DeoC/FbaB aldolase family. ADHS subfamily. As to quaternary structure, homodecamer.

The enzyme catalyses 1-deoxy-D-threo-hexo-2,5-diulose 6-phosphate + L-aspartate 4-semialdehyde = 2,3-dioxopropyl phosphate + 2-amino-2,3,7-trideoxy-D-lyxo-hept-6-ulosonate. Functionally, catalyzes a transaldol reaction between 6-deoxy-5-ketofructose 1-phosphate (DKFP) and L-aspartate semialdehyde (ASA) with an elimination of hydroxypyruvaldehyde phosphate to yield 2-amino-3,7-dideoxy-D-threo-hept-6-ulosonate (ADH). Plays a key role in an alternative pathway of the biosynthesis of 3-dehydroquinate (DHQ), which is involved in the canonical pathway for the biosynthesis of aromatic amino acids and which is also a precursor for the biosynthesis of p-aminobenzoic acid (PABA) in M.maripaludis. Does not possess fructose-bisphosphate (FBP) aldolase activity. The chain is 2-amino-3,7-dideoxy-D-threo-hept-6-ulosonate synthase from Methanococcus maripaludis (strain DSM 14266 / JCM 13030 / NBRC 101832 / S2 / LL).